The chain runs to 447 residues: UDP-glycosyltransferase 79B10 (447 aa).

Residues S260, 319 to 321 (VQQ), 336 to 344 (HCGFGSMWE), and 358 to 361 (LADQ) contribute to the UDP-alpha-D-glucose site.

This sequence belongs to the UDP-glycosyltransferase family.

This chain is UDP-glycosyltransferase 79B10 (UGT79B10), found in Arabidopsis thaliana (Mouse-ear cress).